A 427-amino-acid chain; its full sequence is 3-phosphoshikimate 1-carboxyvinyltransferase (427 aa).

3 residues coordinate 3-phosphoshikimate: lysine 20, serine 21, and arginine 25. Lysine 20 contacts phosphoenolpyruvate. Residues glycine 92 and arginine 120 each coordinate phosphoenolpyruvate. The 3-phosphoshikimate site is built by serine 166, glutamine 168, aspartate 312, and lysine 339. Glutamine 168 provides a ligand contact to phosphoenolpyruvate. Aspartate 312 functions as the Proton acceptor in the catalytic mechanism. The phosphoenolpyruvate site is built by arginine 343 and arginine 385.

The protein belongs to the EPSP synthase family. In terms of assembly, monomer.

It localises to the cytoplasm. It catalyses the reaction 3-phosphoshikimate + phosphoenolpyruvate = 5-O-(1-carboxyvinyl)-3-phosphoshikimate + phosphate. It functions in the pathway metabolic intermediate biosynthesis; chorismate biosynthesis; chorismate from D-erythrose 4-phosphate and phosphoenolpyruvate: step 6/7. Catalyzes the transfer of the enolpyruvyl moiety of phosphoenolpyruvate (PEP) to the 5-hydroxyl of shikimate-3-phosphate (S3P) to produce enolpyruvyl shikimate-3-phosphate and inorganic phosphate. This is 3-phosphoshikimate 1-carboxyvinyltransferase from Streptococcus equi subsp. zooepidemicus (strain MGCS10565).